Reading from the N-terminus, the 37-residue chain is Large ribosomal subunit protein bL36c (37 aa).

Belongs to the bacterial ribosomal protein bL36 family.

Its subcellular location is the plastid. The protein localises to the chloroplast. The protein is Large ribosomal subunit protein bL36c of Mesembryanthemum crystallinum (Common ice plant).